We begin with the raw amino-acid sequence, 771 residues long: U3 small nucleolar RNA-associated protein 14 homolog A (771 aa).

A disordered region spans residues 23–49 (PKDYLLSESEDEGDNDGERKHQKLLEA). 5 positions are modified to phosphoserine: Ser-29, Ser-31, Ser-52, Ser-77, and Ser-81. The stretch at 40 to 67 (ERKHQKLLEAISSLDGKNRRKLAERSEA) forms a coiled coil. Lys-122 participates in a covalent cross-link: Glycyl lysine isopeptide (Lys-Gly) (interchain with G-Cter in SUMO2). Position 205 is a phosphothreonine (Thr-205). Coiled coils occupy residues 216–290 (SLEE…EKAR) and 317–347 (LEAR…EEEE). Disordered regions lie at residues 334-355 (TQKL…DVEE) and 367-557 (MNAD…KKEQ). Positions 342–355 (ESEEEEGGTEDVEE) are enriched in acidic residues. Residues 399 to 436 (LEAHGVSESEGEERPVAEEEILLREFEERRSLRKRSEL) are compositionally biased toward basic and acidic residues. Residues Ser-405 and Ser-407 each carry the phosphoserine modification. At Arg-433 the chain carries Citrulline. Phosphoserine is present on residues Ser-437 and Ser-445. Residue Lys-449 forms a Glycyl lysine isopeptide (Lys-Gly) (interchain with G-Cter in SUMO2) linkage. Ser-453 is subject to Phosphoserine. Basic and acidic residues predominate over residues 504–529 (RPERVQTLEELEELGKEECFQNKELP). Lys-519 participates in a covalent cross-link: Glycyl lysine isopeptide (Lys-Gly) (interchain with G-Cter in SUMO2). The span at 535-544 (GQQSERTPNN) shows a compositional bias: polar residues. A compositionally biased stretch (basic and acidic residues) spans 547-557 (DAPKEKKKKEQ). Ser-569 bears the Phosphoserine mark. Arg-589 carries the citrulline modification. A Glycyl lysine isopeptide (Lys-Gly) (interchain with G-Cter in SUMO2) cross-link involves residue Lys-733. The span at 740 to 751 (RSSSRSDLSVIQ) shows a compositional bias: polar residues. The interval 740–771 (RSSSRSDLSVIQRNPKRITTRHKKQLKKCSVD) is disordered. Residues 753-771 (NPKRITTRHKKQLKKCSVD) are compositionally biased toward basic residues.

This sequence belongs to the UTP14 family. In terms of assembly, interacts with DHX37. Post-translationally, citrullinated by PADI4. In terms of tissue distribution, ubiquitously expressed.

It is found in the nucleus. It localises to the nucleolus. In terms of biological role, may be required for ribosome biogenesis. The chain is U3 small nucleolar RNA-associated protein 14 homolog A (UTP14A) from Homo sapiens (Human).